The chain runs to 446 residues: White-opaque regulator 2 (446 aa).

Over residues 1 to 24 (MTQLPSVSELINRTGSIGSSSNIT) the composition is skewed to polar residues. A disordered region spans residues 1 to 203 (MTQLPSVSEL…QPNFPYHNNF (203 aa)). Low complexity predominate over residues 30 to 64 (TTTSATNTTTAATATTVTSTTPRSENSYSPNSPYS). Residues 67–86 (TRPSNTSLTNYSAGSGITVA) are compositionally biased toward polar residues. Composition is skewed to low complexity over residues 87-97 (SSSFQFSQPSP) and 104-120 (STSS…QHQS). Over residues 121-144 (NPSGVSMSSNTSPRTSIVQSMSSV) the composition is skewed to polar residues. The segment covering 166-184 (VQPPPQQQQLQQPPPPPPQ) has biased composition (pro residues). Low complexity predominate over residues 185–195 (QQQHIYPQQQP). Positions 305–332 (CLTCRKRRIKCDERKPTCFNCERSKKSC) form a DNA-binding region, zn(2)-C6 fungal-type. The tract at residues 336 to 402 (QDLSKLPPRK…SGSSTNSRNL (67 aa)) is disordered. Over residues 358–369 (NQQQQQQQQNQQ) the composition is skewed to low complexity. The span at 387–401 (HQITSISGSSTNSRN) shows a compositional bias: polar residues.

It is found in the nucleus. Functionally, transcriptional regulator of the switch between 2 heritable states, the white and opaque states. These 2 cell types differ in many characteristics, including cell structure, mating competence, and virulence. Each state is heritable for many generations, and switching between states occurs stochastically, at low frequency. WOR2 is necessary for the stability of the opaque state phenotypic switching from the white to the opaque phase is a necessary step for mating. Plays a role in cell adhesion and pseudohyphal growth. This Candida albicans (strain SC5314 / ATCC MYA-2876) (Yeast) protein is White-opaque regulator 2 (WOR2).